Here is a 227-residue protein sequence, read N- to C-terminus: Germin-like protein subfamily 1 member 3 (227 aa).

Positions M1–C24 are cleaved as a signal peptide. A disulfide bond links C34 and C50. The Cupin type-1 domain maps to S64–R212. Mn(2+) contacts are provided by H109, H111, and E116. N136 carries an N-linked (GlcNAc...) asparagine glycan. Mn(2+) is bound at residue H160.

The protein belongs to the germin family. In terms of assembly, oligomer (believed to be a pentamer but probably hexamer).

Its subcellular location is the secreted. The protein localises to the extracellular space. It is found in the apoplast. May play a role in plant defense. Probably has no oxalate oxidase activity even if the active site is conserved. The protein is Germin-like protein subfamily 1 member 3 of Arabidopsis thaliana (Mouse-ear cress).